Consider the following 191-residue polypeptide: Thiol:disulfide interchange protein TxlA (191 aa).

The helical transmembrane segment at 14–30 (ILVIAAALVLTILVVLG) threads the bilayer. The 122-residue stretch at 27–148 (VVLGSRQPSA…LAANLDALVE (122 aa)) folds into the Thioredoxin domain. A disulfide bridge links Cys-69 with Cys-72. A compositionally biased stretch (polar residues) spans 165–185 (SADLQPSRSSQTDPRSHSGQV). Residues 165–191 (SADLQPSRSSQTDPRSHSGQVQDGVLD) are disordered.

Belongs to the thioredoxin family.

It localises to the cell membrane. Functionally, required for disulfide bond formation in some proteins. Acts by transferring its disulfide bond to other proteins and is reduced in the process. The polypeptide is Thiol:disulfide interchange protein TxlA (txlA) (Synechococcus elongatus (strain ATCC 33912 / PCC 7942 / FACHB-805) (Anacystis nidulans R2)).